A 239-amino-acid polypeptide reads, in one-letter code: Probable transcriptional regulatory protein BPUM_0743 (239 aa).

It belongs to the TACO1 family. YeeN subfamily.

The protein resides in the cytoplasm. The protein is Probable transcriptional regulatory protein BPUM_0743 of Bacillus pumilus (strain SAFR-032).